We begin with the raw amino-acid sequence, 482 residues long: Glutamate--tRNA ligase (482 aa).

The 'HIGH' region motif lies at 9–19 (PSPTGYLHIGG). The 'KMSKS' region signature appears at 252–256 (KLSKR). Position 255 (lysine 255) interacts with ATP.

Belongs to the class-I aminoacyl-tRNA synthetase family. Glutamate--tRNA ligase type 1 subfamily. As to quaternary structure, monomer.

It is found in the cytoplasm. The enzyme catalyses tRNA(Glu) + L-glutamate + ATP = L-glutamyl-tRNA(Glu) + AMP + diphosphate. Functionally, catalyzes the attachment of glutamate to tRNA(Glu) in a two-step reaction: glutamate is first activated by ATP to form Glu-AMP and then transferred to the acceptor end of tRNA(Glu). This Ureaplasma urealyticum serovar 10 (strain ATCC 33699 / Western) protein is Glutamate--tRNA ligase.